The chain runs to 393 residues: NAD(P)H-quinone oxidoreductase subunit H, chloroplastic (393 aa).

This sequence belongs to the complex I 49 kDa subunit family. In terms of assembly, NDH is composed of at least 16 different subunits, 5 of which are encoded in the nucleus.

Its subcellular location is the plastid. It localises to the chloroplast thylakoid membrane. The enzyme catalyses a plastoquinone + NADH + (n+1) H(+)(in) = a plastoquinol + NAD(+) + n H(+)(out). It catalyses the reaction a plastoquinone + NADPH + (n+1) H(+)(in) = a plastoquinol + NADP(+) + n H(+)(out). In terms of biological role, NDH shuttles electrons from NAD(P)H:plastoquinone, via FMN and iron-sulfur (Fe-S) centers, to quinones in the photosynthetic chain and possibly in a chloroplast respiratory chain. The immediate electron acceptor for the enzyme in this species is believed to be plastoquinone. Couples the redox reaction to proton translocation, and thus conserves the redox energy in a proton gradient. This is NAD(P)H-quinone oxidoreductase subunit H, chloroplastic from Carica papaya (Papaya).